Here is a 277-residue protein sequence, read N- to C-terminus: Digeranylgeranylglyceryl phosphate synthase (277 aa).

Helical transmembrane passes span 13-33 (PGNA…AGGL), 40-60 (AFAV…NDYF), 89-109 (VALF…AIAI), 143-163 (FLYG…LFAL), 199-219 (RSLY…PLPY), 220-240 (LLGL…CGLA), and 256-276 (WLKA…LAVV).

This sequence belongs to the UbiA prenyltransferase family. DGGGP synthase subfamily. It depends on Mg(2+) as a cofactor.

The protein localises to the cell membrane. It catalyses the reaction sn-3-O-(geranylgeranyl)glycerol 1-phosphate + (2E,6E,10E)-geranylgeranyl diphosphate = 2,3-bis-O-(geranylgeranyl)-sn-glycerol 1-phosphate + diphosphate. It participates in membrane lipid metabolism; glycerophospholipid metabolism. Its function is as follows. Prenyltransferase that catalyzes the transfer of the geranylgeranyl moiety of geranylgeranyl diphosphate (GGPP) to the C2 hydroxyl of (S)-3-O-geranylgeranylglyceryl phosphate (GGGP). This reaction is the second ether-bond-formation step in the biosynthesis of archaeal membrane lipids. The sequence is that of Digeranylgeranylglyceryl phosphate synthase from Natronomonas pharaonis (strain ATCC 35678 / DSM 2160 / CIP 103997 / JCM 8858 / NBRC 14720 / NCIMB 2260 / Gabara) (Halobacterium pharaonis).